Reading from the N-terminus, the 105-residue chain is Flagellar transcriptional regulator FlhD (105 aa).

It belongs to the FlhD family. In terms of assembly, homodimer; disulfide-linked. Forms a heterohexamer composed of two FlhC and four FlhD subunits. Each FlhC binds a FlhD dimer, forming a heterotrimer, and a hexamer assembles by dimerization of two heterotrimers.

Its subcellular location is the cytoplasm. Functions in complex with FlhC as a master transcriptional regulator that regulates transcription of several flagellar and non-flagellar operons by binding to their promoter region. Activates expression of class 2 flagellar genes, including fliA, which is a flagellum-specific sigma factor that turns on the class 3 genes. Also regulates genes whose products function in a variety of physiological pathways. This Cupriavidus necator (strain ATCC 17699 / DSM 428 / KCTC 22496 / NCIMB 10442 / H16 / Stanier 337) (Ralstonia eutropha) protein is Flagellar transcriptional regulator FlhD.